A 403-amino-acid chain; its full sequence is uncharacterized protein (403 aa).

6 consecutive transmembrane segments (helical) span residues Phe-31–Phe-51, Leu-186–Val-206, Ile-238–Ile-258, Leu-268–Cys-288, Leu-303–Val-323, and Leu-355–Leu-375.

This sequence to B.subtilis YhaP.

The protein resides in the cell membrane. This is an uncharacterized protein from Methanocaldococcus jannaschii (strain ATCC 43067 / DSM 2661 / JAL-1 / JCM 10045 / NBRC 100440) (Methanococcus jannaschii).